The following is a 275-amino-acid chain: ATP synthase subunit a (275 aa).

The next 7 membrane-spanning stretches (helical) occupy residues 46-66 (RLML…VIAM), 104-124 (FLPV…ASII), 135-155 (IGMP…VGIK), 166-186 (SIVV…IEFI), 204-224 (MLAG…FFFV), 231-251 (IFGV…LLVI), and 252-272 (FLQA…ALHA).

The protein belongs to the ATPase A chain family. F-type ATPases have 2 components, CF(1) - the catalytic core - and CF(0) - the membrane proton channel. CF(1) has five subunits: alpha(3), beta(3), gamma(1), delta(1), epsilon(1). CF(0) has three main subunits: a(1), b(2) and c(9-12). The alpha and beta chains form an alternating ring which encloses part of the gamma chain. CF(1) is attached to CF(0) by a central stalk formed by the gamma and epsilon chains, while a peripheral stalk is formed by the delta and b chains.

The protein resides in the cell membrane. In terms of biological role, key component of the proton channel; it plays a direct role in the translocation of protons across the membrane. The protein is ATP synthase subunit a of Rhodococcus erythropolis (strain PR4 / NBRC 100887).